The sequence spans 958 residues: Voltage-gated inwardly rectifying potassium channel KCNH6 (958 aa).

Residues 1-261 are Cytoplasmic-facing; sequence MPVRRGHVAP…YSPFKAVWDW (261 aa). Residues 41 to 70 enclose the PAS domain; the sequence is IIYCNDGFCELFGYSRVEVMQQPCTCDFLT. The region spanning 92–144 is the PAC domain; that stretch reads CKVDILYYRKDASSFRCLVDVVPVKNEDGAVIMFILNFEDLAQLLAKCSSRSL. A helical transmembrane segment spans residues 262 to 282; sequence LILLLVIYTAVFTPYSAAFLL. Residues 283–298 lie on the Extracellular side of the membrane; sequence SDQDESRRGACSYTCS. A helical transmembrane segment spans residues 299–319; the sequence is PLTVVDLIVDIMFVVDIVINF. Residues 320-340 are Cytoplasmic-facing; sequence RTTYVNTNDEVVSHPRRIAVH. The helical transmembrane segment at 341–361 threads the bilayer; the sequence is YFKGWFLIDMVAAIPFDLLIF. Residues 362 to 370 are Extracellular-facing; that stretch reads RTGSDETTT. Residues 371-391 traverse the membrane as a helical; Voltage-sensor segment; the sequence is LIGLLKTARLLRLVRVARKLD. Residues 392 to 398 lie on the Cytoplasmic side of the membrane; it reads RYSEYGA. Residues 399-419 traverse the membrane as a helical segment; that stretch reads AVLFLLMCTFALIAHWLACIW. The Extracellular segment spans residues 420–463; that stretch reads YAIGNVERPYLEHKIGWLDSLGVQLGKRYNGSDPASGPSVQDKY. A glycan (N-linked (GlcNAc...) (complex) asparagine) is linked at asparagine 449. The pore-forming intramembrane region spans 464–484; it reads VTALYFTFSSLTSVGFGNVSP. The Selectivity filter signature appears at 476-481; that stretch reads SVGFGN. Topologically, residues 485–490 are extracellular; the sequence is NTNSEK. The chain crosses the membrane as a helical span at residues 491-511; the sequence is VFSICVMLIGSLMYASIFGNV. Over 512 to 958 the chain is Cytoplasmic; sequence SAIIQRLYSG…DPGFAGSWGH (447 aa). The tract at residues 594-694 is cNMP-binding domain; the sequence is AFSGAGKGCL…IQRADLLEVL (101 aa). 2 disordered regions span residues 720 to 751 and 845 to 910; these read GLHS…PPLS and TTSP…PPLA. The segment covering 724–745 has biased composition (polar residues); the sequence is SPRQAPGSQDHQGFFLSDNQSD.

It belongs to the potassium channel family. H (Eag) (TC 1.A.1.20) subfamily. Kv11.2/KCNH6 sub-subfamily. The potassium channel is probably composed of a homo- or heterotetrameric complex of pore-forming alpha subunits that can associate only within their subfamily. In terms of tissue distribution, expressed in prolactin-secreting adenomas.

It localises to the cell membrane. The enzyme catalyses K(+)(in) = K(+)(out). In terms of biological role, pore-forming (alpha) subunit of voltage-gated inwardly rectifying potassium channel. Characterized by unusual gating kinetics by producing relatively small outward currents during membrane depolarization and large inward currents during subsequent repolarization which reflect a rapid inactivation during depolarization and quick recovery from inactivation but slow deactivation (closing) during repolarization. Activates even more slowly than KCNH2. This is Voltage-gated inwardly rectifying potassium channel KCNH6 from Homo sapiens (Human).